Here is an 821-residue protein sequence, read N- to C-terminus: G-type lectin S-receptor-like serine/threonine-protein kinase SD2-5 (821 aa).

A signal peptide spans 1 to 21 (MRGVFIVIVTCLVFLPDPLRA). The Extracellular segment spans residues 22–429 (GVASIGSITP…NGEDDGKHFP (408 aa)). A Bulb-type lectin domain is found at 33–148 (FGGSQMNYIN…DGTSIWESFD (116 aa)). N-linked (GlcNAc...) asparagine glycans are attached at residues Asn-51, Asn-121, Asn-174, and Asn-248. Residues 280-314 (PSDLCGTPEPCGPYYVCSGSKVCGCVSGLSRARSD) enclose the EGF-like; atypical domain. Cystine bridges form between Cys-284–Cys-296 and Cys-290–Cys-302. A PAN domain is found at 323–411 (CKKTKDNATL…SGFVSYIKIA (89 aa)). N-linked (GlcNAc...) asparagine glycans are attached at residues Asn-329, Asn-370, and Asn-380. 2 cysteine pairs are disulfide-bonded: Cys-363–Cys-385 and Cys-367–Cys-373. Residues 430 to 450 (YVVIIVVVTVFIIAVLIFVAF) form a helical membrane-spanning segment. At 451 to 821 (RIHKRKKMIL…LSAVRLSGPR (371 aa)) the chain is on the cytoplasmic side. Positions 493–768 (NNFSVKLGQG…KVVQMLEGVF (276 aa)) constitute a Protein kinase domain. ATP is bound by residues 499 to 507 (LGQGGFGSV) and Lys-521. Residues 581-599 (KDGDVLLDWDTRFNIALGT) form a caM-binding region. The Proton acceptor role is filled by Asp-618. Ser-635 carries the post-translational modification Phosphoserine. A Phosphothreonine modification is found at Thr-652.

This sequence belongs to the protein kinase superfamily. Ser/Thr protein kinase family. As to quaternary structure, interacts with PUB9, PUB13, PUB14 and PUB29.

The protein resides in the membrane. It carries out the reaction L-seryl-[protein] + ATP = O-phospho-L-seryl-[protein] + ADP + H(+). It catalyses the reaction L-threonyl-[protein] + ATP = O-phospho-L-threonyl-[protein] + ADP + H(+). The protein is G-type lectin S-receptor-like serine/threonine-protein kinase SD2-5 (SD25) of Arabidopsis thaliana (Mouse-ear cress).